A 485-amino-acid chain; its full sequence is UDP-N-acetylmuramate--L-alanine ligase (485 aa).

120-126 (GSHGKTT) serves as a coordination point for ATP.

This sequence belongs to the MurCDEF family.

It is found in the cytoplasm. It catalyses the reaction UDP-N-acetyl-alpha-D-muramate + L-alanine + ATP = UDP-N-acetyl-alpha-D-muramoyl-L-alanine + ADP + phosphate + H(+). Its pathway is cell wall biogenesis; peptidoglycan biosynthesis. Functionally, cell wall formation. This Rickettsia peacockii (strain Rustic) protein is UDP-N-acetylmuramate--L-alanine ligase.